A 363-amino-acid chain; its full sequence is 3-isopropylmalate dehydrogenase (363 aa).

79–92 (GPKWEHLPPNDQPE) contacts NAD(+). Positions 100, 110, 139, and 228 each coordinate substrate. Mg(2+) contacts are provided by Asp228, Asp252, and Asp256. Position 286 to 298 (286 to 298 (GSAPDIAGKNIAN)) interacts with NAD(+).

The protein belongs to the isocitrate and isopropylmalate dehydrogenases family. LeuB type 1 subfamily. In terms of assembly, homodimer. It depends on Mg(2+) as a cofactor. Mn(2+) is required as a cofactor.

The protein resides in the cytoplasm. It carries out the reaction (2R,3S)-3-isopropylmalate + NAD(+) = 4-methyl-2-oxopentanoate + CO2 + NADH. Its pathway is amino-acid biosynthesis; L-leucine biosynthesis; L-leucine from 3-methyl-2-oxobutanoate: step 3/4. Catalyzes the oxidation of 3-carboxy-2-hydroxy-4-methylpentanoate (3-isopropylmalate) to 3-carboxy-4-methyl-2-oxopentanoate. The product decarboxylates to 4-methyl-2 oxopentanoate. The polypeptide is 3-isopropylmalate dehydrogenase (Vibrio vulnificus (strain CMCP6)).